Consider the following 819-residue polypeptide: Cadherin-24 (819 aa).

A signal peptide spans 1 to 19 (MWGLVRLLLAWLGGWGCMG). Residues 21-44 (LAAPARAWAGSREHPGPALLRTRR) constitute a propeptide that is removed on maturation. Topologically, residues 45-641 (SWVWNQFFVI…LSAAGLSTGA (597 aa)) are extracellular. Cadherin domains follow at residues 46–150 (WVWN…PPIF), 151–259 (PLGP…PPKF), 260–374 (PQSL…PPAF), 375–517 (TQAA…APQL), and 517–630 (LAEP…WPEA). Asn446, Asn548, and Asn563 each carry an N-linked (GlcNAc...) asparagine glycan. Residues 642-662 (LLAIITCVGALLALVVLFVAL) form a helical membrane-spanning segment. The Cytoplasmic segment spans residues 663–819 (RRQKQEALMV…LYGAKEPPAP (157 aa)). Residues 768–800 (YEGRGSSCGSLSSLGSGSEAGGAPGPAEPLDDW) form a disordered region. Positions 771-784 (RGSSCGSLSSLGSG) are enriched in low complexity.

As to quaternary structure, associates with alpha-, beta- and delta-catenins.

It localises to the cell membrane. Functionally, cadherins are calcium-dependent cell adhesion proteins. They preferentially interact with themselves in a homophilic manner in connecting cells; cadherins may thus contribute to the sorting of heterogeneous cell types. Cadherin-24 mediate strong cell-cell adhesion. The chain is Cadherin-24 (CDH24) from Homo sapiens (Human).